The primary structure comprises 684 residues: Glycine--tRNA ligase beta subunit (684 aa).

The protein belongs to the class-II aminoacyl-tRNA synthetase family. Tetramer of two alpha and two beta subunits.

It is found in the cytoplasm. It carries out the reaction tRNA(Gly) + glycine + ATP = glycyl-tRNA(Gly) + AMP + diphosphate. This chain is Glycine--tRNA ligase beta subunit, found in Pseudomonas aeruginosa (strain ATCC 15692 / DSM 22644 / CIP 104116 / JCM 14847 / LMG 12228 / 1C / PRS 101 / PAO1).